Consider the following 960-residue polypeptide: Serine/threonine-protein kinase atg1 (960 aa).

In terms of domain architecture, Protein kinase spans 22–327; it reads YTRLDEIGRG…FPEFFSNNVI (306 aa). Residues 28 to 36 and lysine 51 contribute to the ATP site; that span reads IGRGSFATV. Aspartate 165 serves as the catalytic Proton acceptor. Disordered stretches follow at residues 333-467, 503-538, 550-571, 673-694, 789-815, and 926-960; these read GLLA…RAQE, PRLQ…PHAN, ARAD…QSPT, SAST…SADS, RLPP…TADV, and AKRS…TPPR. Polar residues-rich tracts occupy residues 376-388 and 520-536; these read PVTT…TPPT and RRTT…SSPH. The segment covering 550–566 has biased composition (basic and acidic residues); sequence ARADSTHQRQHSYERRY. Positions 789-800 are enriched in basic and acidic residues; the sequence is RLPPDHPSHPDN. Residues 801 to 815 are compositionally biased toward low complexity; the sequence is HSISSTAGSSSTADV. Over residues 930-951 the composition is skewed to polar residues; that stretch reads SAPTPTAGSAGKTPTSNISPVT.

This sequence belongs to the protein kinase superfamily. Ser/Thr protein kinase family. APG1/unc-51/ULK1 subfamily. In terms of assembly, homodimer. Forms a ternary complex with ATG13 and ATG17.

The protein localises to the cytoplasm. Its subcellular location is the preautophagosomal structure membrane. It catalyses the reaction L-seryl-[protein] + ATP = O-phospho-L-seryl-[protein] + ADP + H(+). It carries out the reaction L-threonyl-[protein] + ATP = O-phospho-L-threonyl-[protein] + ADP + H(+). Its function is as follows. Serine/threonine protein kinase involved in the cytoplasm to vacuole transport (Cvt) and found to be essential in autophagy, where it is required for the formation of autophagosomes. Involved in the clearance of protein aggregates which cannot be efficiently cleared by the proteasome. Required for selective autophagic degradation of the nucleus (nucleophagy) as well as for mitophagy which contributes to regulate mitochondrial quantity and quality by eliminating the mitochondria to a basal level to fulfill cellular energy requirements and preventing excess ROS production. Also involved in endoplasmic reticulum-specific autophagic process, in selective removal of ER-associated degradation (ERAD) substrates. Plays a key role in ATG9 and ATG23 cycling through the pre-autophagosomal structure and is necessary to promote ATG18 binding to ATG9 through phosphorylation of ATG9. Catalyzes phosphorylation of ATG4, decreasing the interaction between ATG4 and ATG8 and impairing deconjugation of PE-conjugated forms of ATG8. In Penicillium rubens (strain ATCC 28089 / DSM 1075 / NRRL 1951 / Wisconsin 54-1255) (Penicillium chrysogenum), this protein is Serine/threonine-protein kinase atg1.